We begin with the raw amino-acid sequence, 140 residues long: FLYWCH family member 2 (140 aa).

2 disordered regions span residues 1–39 and 83–140; these read MPLP…PREF and THPE…GKSL. S21 is subject to Phosphoserine. Residues 98–114 show a composition bias toward basic and acidic residues; that stretch reads PEQKRSRQDPGADRTED. Residues 118–127 are compositionally biased toward low complexity; sequence AAGPPEAAGE.

In Pongo abelii (Sumatran orangutan), this protein is FLYWCH family member 2 (FLYWCH2).